The sequence spans 290 residues: Acetyl-coenzyme A carboxylase carboxyl transferase subunit beta (290 aa).

The CoA carboxyltransferase N-terminal domain maps to 28-290; that stretch reads IMTKCPKCKK…TGGDIEWLQD (263 aa). C32, C35, C51, and C54 together coordinate Zn(2+). The segment at 32 to 54 adopts a C4-type zinc-finger fold; the sequence is CPKCKKIMLTKELDKNMRVCMNC.

This sequence belongs to the AccD/PCCB family. As to quaternary structure, acetyl-CoA carboxylase is a heterohexamer composed of biotin carboxyl carrier protein (AccB), biotin carboxylase (AccC) and two subunits each of ACCase subunit alpha (AccA) and ACCase subunit beta (AccD). Zn(2+) serves as cofactor.

It localises to the cytoplasm. It catalyses the reaction N(6)-carboxybiotinyl-L-lysyl-[protein] + acetyl-CoA = N(6)-biotinyl-L-lysyl-[protein] + malonyl-CoA. It functions in the pathway lipid metabolism; malonyl-CoA biosynthesis; malonyl-CoA from acetyl-CoA: step 1/1. Inhibited by pyrrolidine dione antibiotics moiramide B (CPD1) and CPD2. Component of the acetyl coenzyme A carboxylase (ACC) complex. Biotin carboxylase (BC) catalyzes the carboxylation of biotin on its carrier protein (BCCP) and then the CO(2) group is transferred by the transcarboxylase to acetyl-CoA to form malonyl-CoA. The protein is Acetyl-coenzyme A carboxylase carboxyl transferase subunit beta of Bacillus subtilis (strain 168).